Consider the following 152-residue polypeptide: SsrA-binding protein (152 aa).

Belongs to the SmpB family.

It localises to the cytoplasm. Functionally, required for rescue of stalled ribosomes mediated by trans-translation. Binds to transfer-messenger RNA (tmRNA), required for stable association of tmRNA with ribosomes. tmRNA and SmpB together mimic tRNA shape, replacing the anticodon stem-loop with SmpB. tmRNA is encoded by the ssrA gene; the 2 termini fold to resemble tRNA(Ala) and it encodes a 'tag peptide', a short internal open reading frame. During trans-translation Ala-aminoacylated tmRNA acts like a tRNA, entering the A-site of stalled ribosomes, displacing the stalled mRNA. The ribosome then switches to translate the ORF on the tmRNA; the nascent peptide is terminated with the 'tag peptide' encoded by the tmRNA and targeted for degradation. The ribosome is freed to recommence translation, which seems to be the essential function of trans-translation. The polypeptide is SsrA-binding protein (Gloeobacter violaceus (strain ATCC 29082 / PCC 7421)).